We begin with the raw amino-acid sequence, 243 residues long: Zinc import ATP-binding protein ZnuC (243 aa).

The ABC transporter domain maps to 8-225 (LNLSNVSYYI…SEFQKLFGHH (218 aa)). 40-47 (GPNGAGKS) is a binding site for ATP.

The protein belongs to the ABC transporter superfamily. Zinc importer (TC 3.A.1.15.5) family. The complex is composed of two ATP-binding proteins (ZnuC), two transmembrane proteins (ZnuB) and a solute-binding protein (ZnuA).

It localises to the cell inner membrane. The catalysed reaction is Zn(2+)(out) + ATP(in) + H2O(in) = Zn(2+)(in) + ADP(in) + phosphate(in) + H(+)(in). Part of the ABC transporter complex ZnuABC involved in zinc import. Responsible for energy coupling to the transport system. The polypeptide is Zinc import ATP-binding protein ZnuC (Psychrobacter cryohalolentis (strain ATCC BAA-1226 / DSM 17306 / VKM B-2378 / K5)).